An 826-amino-acid polypeptide reads, in one-letter code: Ribonucleoside-diphosphate reductase large subunit (826 aa).

Substrate-binding positions include Thr-171, 186-187 (SC), Gly-217, 387-391 (NLCAE), and 594-598 (PTSGC). Cys-187 and Cys-403 are joined by a disulfide. The active-site Proton acceptor is Asn-387. Residue Cys-389 is the Cysteine radical intermediate of the active site. The active-site Proton acceptor is Glu-391. The disordered stretch occupies residues 747-769 (SVPREEQNERSPAEQMPPRPMEP). Positions 749-758 (PREEQNERSP) are enriched in basic and acidic residues.

It belongs to the ribonucleoside diphosphate reductase large chain family. As to quaternary structure, heterotetramer composed of a homodimer of the large subunit (R1) and a homodimer of the small subunit (R2). Larger multisubunit protein complex are also active, composed of (R1)n(R2)n.

It catalyses the reaction a 2'-deoxyribonucleoside 5'-diphosphate + [thioredoxin]-disulfide + H2O = a ribonucleoside 5'-diphosphate + [thioredoxin]-dithiol. In terms of biological role, ribonucleoside-diphosphate reductase holoenzyme provides the precursors necessary for viral DNA synthesis. Allows virus growth in non-dividing cells, as well as reactivation from latency in infected hosts. Catalyzes the biosynthesis of deoxyribonucleotides from the corresponding ribonucleotides. The polypeptide is Ribonucleoside-diphosphate reductase large subunit (Homo sapiens (Human)).